Consider the following 328-residue polypeptide: Phenylalanine--tRNA ligase alpha subunit (328 aa).

A Mg(2+)-binding site is contributed by E253.

Belongs to the class-II aminoacyl-tRNA synthetase family. Phe-tRNA synthetase alpha subunit type 1 subfamily. In terms of assembly, tetramer of two alpha and two beta subunits. It depends on Mg(2+) as a cofactor.

It localises to the cytoplasm. It catalyses the reaction tRNA(Phe) + L-phenylalanine + ATP = L-phenylalanyl-tRNA(Phe) + AMP + diphosphate + H(+). In Actinobacillus pleuropneumoniae serotype 5b (strain L20), this protein is Phenylalanine--tRNA ligase alpha subunit.